The sequence spans 292 residues: Elongation factor Ts (292 aa).

The involved in Mg(2+) ion dislocation from EF-Tu stretch occupies residues 79-82; that stretch reads TDFV.

The protein belongs to the EF-Ts family.

It is found in the cytoplasm. Its function is as follows. Associates with the EF-Tu.GDP complex and induces the exchange of GDP to GTP. It remains bound to the aminoacyl-tRNA.EF-Tu.GTP complex up to the GTP hydrolysis stage on the ribosome. This is Elongation factor Ts from Xylella fastidiosa (strain Temecula1 / ATCC 700964).